Reading from the N-terminus, the 548-residue chain is Non-structural protein NS1 (548 aa).

Belongs to the orbivirus non-structural protein NS1 family.

The chain is Non-structural protein NS1 (Segment-5) from Camelus dromedarius (Dromedary).